The primary structure comprises 141 residues: Large ribosomal subunit protein uL14 (141 aa).

Belongs to the universal ribosomal protein uL14 family. In terms of assembly, part of the 50S ribosomal subunit. Forms a cluster with proteins L3 and L24e, part of which may contact the 16S rRNA in 2 intersubunit bridges.

Its function is as follows. Binds to 23S rRNA. Forms part of two intersubunit bridges in the 70S ribosome. The chain is Large ribosomal subunit protein uL14 from Pyrococcus furiosus (strain ATCC 43587 / DSM 3638 / JCM 8422 / Vc1).